Reading from the N-terminus, the 286-residue chain is Pyridoxal kinase PdxY (286 aa).

Residues serine 9 and 44–45 each bind substrate; that span reads MQ. ATP contacts are provided by aspartate 111, glutamate 147, and lysine 180. Residue aspartate 221 participates in substrate binding.

It belongs to the pyridoxine kinase family. PdxY subfamily. In terms of assembly, homodimer. Mg(2+) serves as cofactor.

The enzyme catalyses pyridoxal + ATP = pyridoxal 5'-phosphate + ADP + H(+). It participates in cofactor metabolism; pyridoxal 5'-phosphate salvage; pyridoxal 5'-phosphate from pyridoxal: step 1/1. Pyridoxal kinase involved in the salvage pathway of pyridoxal 5'-phosphate (PLP). Catalyzes the phosphorylation of pyridoxal to PLP. This Burkholderia lata (strain ATCC 17760 / DSM 23089 / LMG 22485 / NCIMB 9086 / R18194 / 383) protein is Pyridoxal kinase PdxY.